A 200-amino-acid polypeptide reads, in one-letter code: Small ribosomal subunit protein uS4c (200 aa).

The S4 RNA-binding domain occupies 90 to 150; sequence MRLDNIIFRL…NRKESVIIKN (61 aa).

The protein belongs to the universal ribosomal protein uS4 family. In terms of assembly, part of the 30S ribosomal subunit. Contacts protein S5. The interaction surface between S4 and S5 is involved in control of translational fidelity.

Its subcellular location is the plastid. The protein localises to the chloroplast. One of the primary rRNA binding proteins, it binds directly to 16S rRNA where it nucleates assembly of the body of the 30S subunit. Functionally, with S5 and S12 plays an important role in translational accuracy. The sequence is that of Small ribosomal subunit protein uS4c (rps4) from Pellia neesiana (Liverwort).